We begin with the raw amino-acid sequence, 33 residues long: Brevinin-2DYc (33 aa).

Cys-27 and Cys-33 are disulfide-bonded.

As to expression, expressed by the skin glands.

The protein localises to the secreted. Antimicrobial peptide. A mixture of Brevinin-2DYc/2DYd is active against the Gram-positive bacterium S.aureus (MIC=15 uM) and the Gram-negative bacterium E.coli (MIC=15 uM). This Rana dybowskii (Dybovsky's frog) protein is Brevinin-2DYc.